We begin with the raw amino-acid sequence, 86 residues long: Large ribosomal subunit protein uL23 (86 aa).

This sequence belongs to the universal ribosomal protein uL23 family. As to quaternary structure, part of the 50S ribosomal subunit. Contacts protein L29.

Binds to 23S rRNA. One of the proteins that surrounds the polypeptide exit tunnel on the outside of the ribosome. The chain is Large ribosomal subunit protein uL23 from Thermococcus sibiricus (strain DSM 12597 / MM 739).